We begin with the raw amino-acid sequence, 66 residues long: uncharacterized protein (66 aa).

2 helical membrane passes run 4-24 (ALFI…LLIF) and 38-58 (LLTP…ILVL).

Its subcellular location is the membrane. This is an uncharacterized protein from Saccharomyces cerevisiae (strain ATCC 204508 / S288c) (Baker's yeast).